The primary structure comprises 82 residues: RNA-binding protein YbxF (82 aa).

It belongs to the eukaryotic ribosomal protein eL8 family.

The protein is RNA-binding protein YbxF of Geobacillus stearothermophilus (Bacillus stearothermophilus).